Consider the following 610-residue polypeptide: Myoneurin (610 aa).

Residues 24–89 form the BTB domain; sequence CDCTVVIGEF…IYTGTLNLDS (66 aa). The tract at residues 156–199 is disordered; the sequence is SEVSTDSVQANPKPRALTKKSSQSKKKKKAFSSQKPGQSKAVQY. Over residues 171–185 the composition is skewed to basic residues; the sequence is ALTKKSSQSKKKKKA. 2 short sequence motifs (nuclear localization signal) span residues 174 to 190 and 257 to 262; these read KKSSQSKKKKKAFSSQK and KRKRRK. C2H2-type zinc fingers lie at residues 302–324, 330–352, 358–381, 387–409, 415–437, 443–465, 471–493, and 499–522; these read PMCNTCGKVFSEASSLRRHMRIH, YVCHLCGKAFTQCNQLKTHVRTH, YKCELCDKGFAQKCQLVFHSRMHH, YKCDVCNLQFATSSNLKIHARKH, YVCDRCGQRFAQASTLTYHVRRH, YVCDTCGKAFAVSSSLITHSRKH, YICGICGKSFISSGELNKHFRSH, and FICELCGNSYTDIKNLKKHKTKVH. Positions 519-548 are disordered; sequence TKVHSGTDKNPDCSVDDHAVSEQDSVQRSP. Over residues 523–539 the composition is skewed to basic and acidic residues; it reads SGTDKNPDCSVDDHAVS.

The protein belongs to the krueppel C2H2-type zinc-finger protein family. In terms of tissue distribution, mainly expressed in the neuromuscular system. Located in and around synaptic myonuclei in adult muscle. Expression is dysregulated after nerve injury. Also found in the cerebellum, testis, heart, brain and liver.

Its subcellular location is the nucleus. The polypeptide is Myoneurin (Mynn) (Mus musculus (Mouse)).